The following is a 394-amino-acid chain: Obg-like ATPase 1 (394 aa).

One can recognise an OBG-type G domain in the interval 25 to 282 (LKIGIVGLPN…MAPDEAAKYC (258 aa)). ATP contacts are provided by residues 34–39 (NVGKST), 56–60 (FCTIE), and 94–97 (DIAG). Mg(2+) is bound by residues S38 and T58. Residue F129 participates in GTP binding. Residues 230-231 (NL), L231, and 263-265 (SGV) each bind ATP. A GTP-binding site is contributed by 263 to 265 (SGV). A TGS domain is found at 303 to 386 (NLIYFFTAGP…QDGDIIFFKF (84 aa)).

The protein belongs to the TRAFAC class OBG-HflX-like GTPase superfamily. OBG GTPase family. YchF/OLA1 subfamily. In terms of assembly, monomer (Potential). Interacts with CAR4/GAP1. Mg(2+) is required as a cofactor.

It localises to the cytoplasm. Its subcellular location is the cytosol. With respect to regulation, activated by GAP1. Hydrolyzes ATP, and can also hydrolyze GTP with lower efficiency. Has lower affinity for GTP (Potential). Exhibits GTPase activity. Confers sensitivity to salinity stress by suppressing the anti-oxidation enzymatic activities and increasing lipid peroxidation thus leading to the accumulation of reactive oxygen species (ROS). Acts as a negative regulator of disease resistance against bacterial pathogen. The protein is Obg-like ATPase 1 of Arabidopsis thaliana (Mouse-ear cress).